We begin with the raw amino-acid sequence, 207 residues long: MSRYRGPRLRIIRRLRNLPGLTNKLVESKKNQASGNDQSNQKKVSQYCIRLEAKQRLRFNYGLTERQLLNYVRIARCAKGSTGQILLQLLEMRLDNILFRLGVVPTIPSARQLINHRHILVNNRIVDIPSFHCKPKDIITIGAPKTYQSIITKRIEAFAKDQIPDHLTLSLSEQKKPKGFVNYLINRESIGLKINELLVVEYYSRKA.

Residues 92 to 156 form the S4 RNA-binding domain; that stretch reads MRLDNILFRL…YQSIITKRIE (65 aa).

This sequence belongs to the universal ribosomal protein uS4 family. As to quaternary structure, part of the 30S ribosomal subunit. Contacts protein S5. The interaction surface between S4 and S5 is involved in control of translational fidelity.

Its subcellular location is the plastid. It localises to the chloroplast. Its function is as follows. One of the primary rRNA binding proteins, it binds directly to 16S rRNA where it nucleates assembly of the body of the 30S subunit. Functionally, with S5 and S12 plays an important role in translational accuracy. The protein is Small ribosomal subunit protein uS4c (rps4) of Equisetum arvense (Field horsetail).